A 305-amino-acid polypeptide reads, in one-letter code: tRNA dimethylallyltransferase (305 aa).

9–16 (GPTASGKT) is a binding site for ATP. 11–16 (TASGKT) contacts substrate. Interaction with substrate tRNA stretches follow at residues 34-37 (DSAL), 158-162 (QRLSR), and 239-244 (RCVGYR).

It belongs to the IPP transferase family. Monomer. Mg(2+) is required as a cofactor.

It catalyses the reaction adenosine(37) in tRNA + dimethylallyl diphosphate = N(6)-dimethylallyladenosine(37) in tRNA + diphosphate. In terms of biological role, catalyzes the transfer of a dimethylallyl group onto the adenine at position 37 in tRNAs that read codons beginning with uridine, leading to the formation of N6-(dimethylallyl)adenosine (i(6)A). This chain is tRNA dimethylallyltransferase, found in Aeromonas hydrophila subsp. hydrophila (strain ATCC 7966 / DSM 30187 / BCRC 13018 / CCUG 14551 / JCM 1027 / KCTC 2358 / NCIMB 9240 / NCTC 8049).